The following is a 217-amino-acid chain: Ras-related protein Rab-19 (217 aa).

GTP contacts are provided by Ser26, Val28, Gly29, Lys30, Thr31, Cys32, Tyr42, Glu44, and Thr49. Thr31 is a Mg(2+) binding site. Positions 39-54 (SGVYMEAQQNTIGVDF) match the Switch 1 motif. Thr49 and Asp72 together coordinate Mg(2+). A Switch 2 motif is present at residues 74–89 (AGQERFRTITQSYYRS). Gly75, Asn130, Lys131, Asp133, Ser161, Ala162, and Lys163 together coordinate GTP. 2 S-geranylgeranyl cysteine lipidation sites follow: Cys215 and Cys217. A Cysteine methyl ester modification is found at Cys217.

This sequence belongs to the small GTPase superfamily. Rab family. It depends on Mg(2+) as a cofactor.

It localises to the cell membrane. The catalysed reaction is GTP + H2O = GDP + phosphate + H(+). Regulated by guanine nucleotide exchange factors (GEFs) which promote the exchange of bound GDP for free GTP. Regulated by GTPase activating proteins (GAPs) which increase the GTP hydrolysis activity. Inhibited by GDP dissociation inhibitors (GDIs). The small GTPases Rab are key regulators of intracellular membrane trafficking, from the formation of transport vesicles to their fusion with membranes. Rabs cycle between an inactive GDP-bound form and an active GTP-bound form that is able to recruit to membranes different set of downstream effectors directly responsible for vesicle formation, movement, tethering and fusion. In Bos taurus (Bovine), this protein is Ras-related protein Rab-19 (RAB19).